The sequence spans 569 residues: WD repeat-containing protein 20 (569 aa).

An N-acetylalanine modification is found at Ala-2. WD repeat units follow at residues 94–138 (RIYK…KETS), 139–210 (KLFN…KSTR), 211–252 (NPLL…FDSV), 253–331 (ELHG…SGSD), 332–426 (EDFQ…NSVP), 427–523 (PPLP…VPLL), and 524–559 (EPLI…CTWG). Phosphoserine is present on residues Ser-357 and Ser-360. Composition is skewed to polar residues over residues 405–423 (NATS…TPGN) and 431–445 (RSNS…NAGS). The disordered stretch occupies residues 405 to 445 (NATSPPAGSNGNSVTTPGNSVPPPLPRSNSLPHSAVSNAGS). Residues Ser-432, Ser-434, and Ser-465 each carry the phosphoserine modification. The tract at residues 450-468 (MDGAIASGVSKFATLSLHD) is mediates XPO1-dependent nuclear export of WDR20-USP12 complexes.

As to quaternary structure, interacts with USP12; promotes translocation of USP12/WDR20 to the plasma membrane. Component of the USP12/WDR20/WDR48 deubiquitinating complex. Interacts with USP46; contributes to the cytoplasmic localization of the USP46/WDR20 complex. Component of the USP12/DMWD/WDR48 deubiquitinating complex.

The protein localises to the cytoplasm. Its subcellular location is the nucleus. In terms of biological role, regulator of deubiquitinating complexes. Activates deubiquitinating activity of complexes containing USP12. Anchors at the base of the ubiquitin-contacting loop of USP12 and remotely modulates the catalytic center of the enzyme. Regulates shuttling of the USP12 deubiquitinase complex between the plasma membrane, cytoplasm and nucleus. The sequence is that of WD repeat-containing protein 20 (WDR20) from Homo sapiens (Human).